A 173-amino-acid chain; its full sequence is 16S rRNA aminocarboxypropyltransferase (173 aa).

Threonine 25, leucine 72, leucine 96, and serine 115 together coordinate S-adenosyl-L-methionine.

This sequence belongs to the TDD superfamily. TSR3 family.

It localises to the cytoplasm. The enzyme catalyses an N(1)-methylpseudouridine in rRNA + S-adenosyl-L-methionine = N(1)-methyl-N(3)-[(3S)-3-amino-3-carboxypropyl]pseudouridine in rRNA + S-methyl-5'-thioadenosine + H(+). Its function is as follows. Aminocarboxypropyltransferase that catalyzes the aminocarboxypropyl transfer on pseudouridine corresponding to position 914 in M.jannaschii 16S rRNA. It constitutes the last step in biosynthesis of the hypermodified N1-methyl-N3-(3-amino-3-carboxypropyl) pseudouridine (m1acp3-Psi). The sequence is that of 16S rRNA aminocarboxypropyltransferase from Methanococcoides burtonii (strain DSM 6242 / NBRC 107633 / OCM 468 / ACE-M).